Reading from the N-terminus, the 403-residue chain is MTDAASLADRVREGDLRLHELEAHADADTAAEARRLLVESQSGASLDAVGNYGFPAEAAESAIENMVGSIQVPMGVAGPVSVDGGSVAGEKYLPLATTEGALLASVNRGCSVINSAGGATARVLKSGMTRAPVFRVADVAEAEALVSWTRDNFAALKEAAEETTNHGELLDVTPYVVGNSVYLRFRYDTKDAMGMNMATIATEAVCGVVEAETAASLVALSGNLCSDKKPAAINAVEGRGRSVTADVRIPREVVEERLHTTPEAVAELNTRKNLVGSAKAASLGFNAHVANVVAAMFLATGQDEAQVVEGANAITTAEVQDGDLYVSVSIASLEVGTVGGGTKLPTQSEGLDILGVSGGGDPAGSNADALAECIAVGSLAGELSLLSALASRHLSSAHAELGR.

Catalysis depends on charge relay system residues glutamate 99 and aspartate 303. Histidine 398 (proton donor) is an active-site residue.

This sequence belongs to the HMG-CoA reductase family.

The enzyme catalyses (R)-mevalonate + 2 NADP(+) + CoA = (3S)-3-hydroxy-3-methylglutaryl-CoA + 2 NADPH + 2 H(+). It functions in the pathway metabolic intermediate biosynthesis; (R)-mevalonate biosynthesis; (R)-mevalonate from acetyl-CoA: step 3/3. Is competitively inhibited by (R)-HMG-CoA and lovastatin (formerly called mevinolin). Functionally, catalyzes the NADPH-dependent reductive deacylation of (S)-3-hydroxy-3-methylglutaryl-CoA (HMG-CoA) to (R)-mevalonate. Functions in the mevalonate (MVA) pathway leading to isopentenyl diphosphate (IPP), a key precursor for the biosynthesis of isoprenoid compounds such as archaeal membrane lipids. Is also able to catalyze the reduction of mevaldehyde to mevalonate and the oxidative acylation of mevaldehyde to HMG-CoA. The sequence is that of 3-hydroxy-3-methylglutaryl-coenzyme A reductase (hmgA) from Haloferax volcanii (strain ATCC 29605 / DSM 3757 / JCM 8879 / NBRC 14742 / NCIMB 2012 / VKM B-1768 / DS2) (Halobacterium volcanii).